Consider the following 317-residue polypeptide: DNA-directed RNA polymerase subunit alpha (317 aa).

Residues 1–234 form an alpha N-terminal domain (alpha-NTD) region; that stretch reads MKQFVRPEFI…AHLEFFIDLN (234 aa). An alpha C-terminal domain (alpha-CTD) region spans residues 249–317; sequence DDKELDRTVE…ASLGLAFRQS (69 aa).

It belongs to the RNA polymerase alpha chain family. Homodimer. The RNAP catalytic core consists of 2 alpha, 1 beta, 1 beta' and 1 omega subunit. When a sigma factor is associated with the core the holoenzyme is formed, which can initiate transcription.

It catalyses the reaction RNA(n) + a ribonucleoside 5'-triphosphate = RNA(n+1) + diphosphate. In terms of biological role, DNA-dependent RNA polymerase catalyzes the transcription of DNA into RNA using the four ribonucleoside triphosphates as substrates. This Mycoplasma capricolum subsp. capricolum (strain California kid / ATCC 27343 / NCTC 10154) protein is DNA-directed RNA polymerase subunit alpha.